The sequence spans 296 residues: UPF0761 membrane protein YE0031 (296 aa).

The next 7 helical transmembrane spans lie at 44–64, 67–87, 108–128, 136–156, 185–205, 212–232, and 246–266; these read LLSL…FPMF, ISIK…GDII, GLIV…NIIW, LVFS…LVGA, LFPL…VPTV, ALIG…GFTM, and VLAV…IVLL.

This sequence belongs to the UPF0761 family.

The protein localises to the cell inner membrane. The sequence is that of UPF0761 membrane protein YE0031 from Yersinia enterocolitica serotype O:8 / biotype 1B (strain NCTC 13174 / 8081).